We begin with the raw amino-acid sequence, 317 residues long: 2,3,4,5-tetrahydropyridine-2,6-dicarboxylate N-succinyltransferase (317 aa).

Residues Asp166 and Glu183 each coordinate Mg(2+). Glu199 functions as the Acyl-anhydride intermediate in the catalytic mechanism. Succinyl-CoA contacts are provided by residues Arg201, Gly216, Ser219, Ala242, Glu257 to Ala258, Gly265, Lys277, and Arg290 to Ser293.

Belongs to the type 2 tetrahydrodipicolinate N-succinyltransferase family. Homotrimer.

Its subcellular location is the cytoplasm. The catalysed reaction is (S)-2,3,4,5-tetrahydrodipicolinate + succinyl-CoA + H2O = (S)-2-succinylamino-6-oxoheptanedioate + CoA. It functions in the pathway amino-acid biosynthesis; L-lysine biosynthesis via DAP pathway; LL-2,6-diaminopimelate from (S)-tetrahydrodipicolinate (succinylase route): step 1/3. Its function is as follows. Catalyzes the conversion of the cyclic tetrahydrodipicolinate (THDP) into the acyclic N-succinyl-L-2-amino-6-oxopimelate using succinyl-CoA. The protein is 2,3,4,5-tetrahydropyridine-2,6-dicarboxylate N-succinyltransferase (dapD) of Mycobacterium tuberculosis (strain CDC 1551 / Oshkosh).